A 2332-amino-acid polypeptide reads, in one-letter code: Phosphatidylinositol phosphatase PTPRQ (2332 aa).

Residues 1–35 (MKKVPIKPEQPEKLRAFNISTHSFSLHWSLPSGHV) form the signal peptide. Fibronectin type-III domains follow at residues 36–99 (ERYQ…TKPG), 100–195 (PPVF…TAES), 199–294 (KVVN…SSST), 350–438 (PPQN…PPDV), 441–539 (AVFD…SHPD), 514–606 (GLYE…SVRT), 610–705 (VPSS…TSED), 710–799 (SPQD…TSET), 804–894 (APEN…TEED), 899–988 (PPQD…TPEG), 993–1093 (PPKD…TDQD), 1098–1190 (FVGN…TEED), 1192–1282 (PETS…TDES), 1287–1380 (PPQN…TQES), 1384–1470 (VVQN…LPET), 1474–1578 (VPTN…TLPG), 1583–1681 (PPEN…TLES), and 1686–1787 (PPNN…IKAP). The Extracellular segment spans residues 36 to 1947 (ERYQVDLVPD…GEGLSERTVE (1912 aa)). An N-linked (GlcNAc...) asparagine glycan is attached at Asn94. 2 N-linked (GlcNAc...) asparagine glycosylation sites follow: Asn202 and Asn394. N-linked (GlcNAc...) asparagine glycans are attached at residues Asn944, Asn1038, Asn1080, and Asn1101. N-linked (GlcNAc...) asparagine glycosylation is found at Asn1290 and Asn1295. Asn1844 carries N-linked (GlcNAc...) asparagine glycosylation. A helical transmembrane segment spans residues 1948–1968 (IILSVTLCILSIILLGTAIFA). Over 1969-2332 (FARIRQKQKE…VELEWEETTM (364 aa)) the chain is Cytoplasmic. In terms of domain architecture, Tyrosine-protein phosphatase spans 2036-2292 (FQEEFSELPK…IFLHQCILDL (257 aa)). The active-site Phosphocysteine intermediate is the Cys2233.

This sequence belongs to the protein-tyrosine phosphatase family. Receptor class 2A subfamily. In terms of assembly, interacts with TPRN. TPRN, CLIC5 and PTPQR form concentric rings at the base of stereocilia and may form a complex. In terms of tissue distribution, in developing kidney, it localizes to the basal membrane of podocytes, beginning when podocyte progenitors can first be identified in the embryonic kidney (at protein level). Expressed in lung and kidney.

It localises to the cell projection. It is found in the stereocilium. The protein resides in the apical cell membrane. The protein localises to the basal cell membrane. It carries out the reaction a 1,2-diacyl-sn-glycero-3-phospho-(1D-myo-inositol-3,4,5-trisphosphate) + H2O = a 1,2-diacyl-sn-glycero-3-phospho-(1D-myo-inositol-4,5-bisphosphate) + phosphate. The enzyme catalyses a 1,2-diacyl-sn-glycero-3-phospho-(1D-myo-inositol-3,4,5-trisphosphate) + H2O = a 1,2-diacyl-sn-glycero-3-phospho-(1D-myo-inositol-3,4-bisphosphate) + phosphate. The catalysed reaction is a 1,2-diacyl-sn-glycero-3-phospho-(1D-myo-inositol-3,5-bisphosphate) + H2O = a 1,2-diacyl-sn-glycero-3-phospho-(1D-myo-inositol-5-phosphate) + phosphate. It catalyses the reaction a 1,2-diacyl-sn-glycero-3-phospho-(1D-myo-inositol-3,5-bisphosphate) + H2O = a 1,2-diacyl-sn-glycero-3-phospho-(1D-myo-inositol-3-phosphate) + phosphate. Its function is as follows. Dephosphorylates phosphatidylinositol phosphates, such as phosphatidylinositol 3,4,5-trisphosphate (PIP3) and phosphatidylinositol 3,5-diphosphates, with preference for PIP3. Phosphate can be hydrolyzed from the D3 and D5 positions in the inositol ring. Has low tyrosine-protein phosphatase activity in vitro; however, the relevance of such activity in vivo is unclear. Plays an important role in adipogenesis of mesenchymal stem cells (MSCs). Regulates the phosphorylation state of AKT1 by regulating the levels of PIP3 in MSCs and preadipocyte cells. Required for hair bundle maturation, a process that enables hair cells to detect and transmit sound and balance signals effectively, therefore affecting auditory function. May act by regulating the level of phosphatidylinositol 4,5-bisphosphate (PIP2) level in the basal region of hair bundles. This chain is Phosphatidylinositol phosphatase PTPRQ (PTPRQ), found in Homo sapiens (Human).